Consider the following 731-residue polypeptide: DNA ligase (731 aa).

NAD(+) contacts are provided by residues aspartate 47–aspartate 51, serine 96–isoleucine 97, and glutamate 133. Residue lysine 135 is the N6-AMP-lysine intermediate of the active site. NAD(+) contacts are provided by arginine 156, glutamate 192, lysine 313, and lysine 337. 4 residues coordinate Zn(2+): cysteine 462, cysteine 465, cysteine 480, and cysteine 486. One can recognise a BRCT domain in the interval alanine 645 to alanine 731.

Belongs to the NAD-dependent DNA ligase family. LigA subfamily. The cofactor is Mg(2+). Mn(2+) is required as a cofactor.

It carries out the reaction NAD(+) + (deoxyribonucleotide)n-3'-hydroxyl + 5'-phospho-(deoxyribonucleotide)m = (deoxyribonucleotide)n+m + AMP + beta-nicotinamide D-nucleotide.. Functionally, DNA ligase that catalyzes the formation of phosphodiester linkages between 5'-phosphoryl and 3'-hydroxyl groups in double-stranded DNA using NAD as a coenzyme and as the energy source for the reaction. It is essential for DNA replication and repair of damaged DNA. The protein is DNA ligase of Acidovorax sp. (strain JS42).